A 347-amino-acid polypeptide reads, in one-letter code: Phenylalanine--tRNA ligase alpha subunit (347 aa).

Mg(2+) is bound at residue glutamate 265.

This sequence belongs to the class-II aminoacyl-tRNA synthetase family. Phe-tRNA synthetase alpha subunit type 1 subfamily. Tetramer of two alpha and two beta subunits. It depends on Mg(2+) as a cofactor.

Its subcellular location is the cytoplasm. The enzyme catalyses tRNA(Phe) + L-phenylalanine + ATP = L-phenylalanyl-tRNA(Phe) + AMP + diphosphate + H(+). In Mycolicibacterium gilvum (strain PYR-GCK) (Mycobacterium gilvum (strain PYR-GCK)), this protein is Phenylalanine--tRNA ligase alpha subunit.